Consider the following 245-residue polypeptide: 1-(5-phosphoribosyl)-5-[(5-phosphoribosylamino)methylideneamino] imidazole-4-carboxamide isomerase (245 aa).

Aspartate 7 (proton acceptor) is an active-site residue. Catalysis depends on aspartate 129, which acts as the Proton donor.

It belongs to the HisA/HisF family.

The protein resides in the cytoplasm. The enzyme catalyses 1-(5-phospho-beta-D-ribosyl)-5-[(5-phospho-beta-D-ribosylamino)methylideneamino]imidazole-4-carboxamide = 5-[(5-phospho-1-deoxy-D-ribulos-1-ylimino)methylamino]-1-(5-phospho-beta-D-ribosyl)imidazole-4-carboxamide. It participates in amino-acid biosynthesis; L-histidine biosynthesis; L-histidine from 5-phospho-alpha-D-ribose 1-diphosphate: step 4/9. The chain is 1-(5-phosphoribosyl)-5-[(5-phosphoribosylamino)methylideneamino] imidazole-4-carboxamide isomerase from Escherichia coli O127:H6 (strain E2348/69 / EPEC).